Consider the following 397-residue polypeptide: Riboflavin biosynthesis protein RibBA (397 aa).

Positions 1–199 (MFHRIEEALE…IEDLIAYRRH (199 aa)) are DHBP synthase. D-ribulose 5-phosphate contacts are provided by residues 26–27 (RE), Asp31, 138–142 (RAGHT), and Glu162. Glu27 is a Mg(2+) binding site. His141 contributes to the Mg(2+) binding site. The segment at 200–397 (HETFVTKEVE…VTKLGHLLNL (198 aa)) is GTP cyclohydrolase II. 250–254 (RVHSE) is a GTP binding site. Cys255, Cys266, and Cys268 together coordinate Zn(2+). Residues Gln271, 293–295 (EGR), and Thr315 contribute to the GTP site. Catalysis depends on Asp327, which acts as the Proton acceptor; for GTP cyclohydrolase activity. Arg329 (nucleophile; for GTP cyclohydrolase activity) is an active-site residue. GTP-binding residues include Thr350 and Lys355.

It in the N-terminal section; belongs to the DHBP synthase family. This sequence in the C-terminal section; belongs to the GTP cyclohydrolase II family. Requires Mg(2+) as cofactor. Mn(2+) serves as cofactor. It depends on Zn(2+) as a cofactor.

The catalysed reaction is D-ribulose 5-phosphate = (2S)-2-hydroxy-3-oxobutyl phosphate + formate + H(+). The enzyme catalyses GTP + 4 H2O = 2,5-diamino-6-hydroxy-4-(5-phosphoribosylamino)-pyrimidine + formate + 2 phosphate + 3 H(+). It participates in cofactor biosynthesis; riboflavin biosynthesis; 2-hydroxy-3-oxobutyl phosphate from D-ribulose 5-phosphate: step 1/1. The protein operates within cofactor biosynthesis; riboflavin biosynthesis; 5-amino-6-(D-ribitylamino)uracil from GTP: step 1/4. In terms of biological role, catalyzes the conversion of D-ribulose 5-phosphate to formate and 3,4-dihydroxy-2-butanone 4-phosphate. Functionally, catalyzes the conversion of GTP to 2,5-diamino-6-ribosylamino-4(3H)-pyrimidinone 5'-phosphate (DARP), formate and pyrophosphate. The sequence is that of Riboflavin biosynthesis protein RibBA from Bacillus cytotoxicus (strain DSM 22905 / CIP 110041 / 391-98 / NVH 391-98).